Consider the following 339-residue polypeptide: Anthranilate phosphoribosyltransferase (339 aa).

5-phospho-alpha-D-ribose 1-diphosphate contacts are provided by residues glycine 80, 83-84, threonine 88, 90-93, 108-116, and serine 120; these read GD, NIST, and KHGNRSVSS. Position 80 (glycine 80) interacts with anthranilate. Mg(2+) is bound at residue serine 92. Residue asparagine 111 participates in anthranilate binding. Position 166 (arginine 166) interacts with anthranilate. Mg(2+)-binding residues include aspartate 225 and glutamate 226.

This sequence belongs to the anthranilate phosphoribosyltransferase family. In terms of assembly, homodimer. Mg(2+) serves as cofactor.

It carries out the reaction N-(5-phospho-beta-D-ribosyl)anthranilate + diphosphate = 5-phospho-alpha-D-ribose 1-diphosphate + anthranilate. It functions in the pathway amino-acid biosynthesis; L-tryptophan biosynthesis; L-tryptophan from chorismate: step 2/5. In terms of biological role, catalyzes the transfer of the phosphoribosyl group of 5-phosphorylribose-1-pyrophosphate (PRPP) to anthranilate to yield N-(5'-phosphoribosyl)-anthranilate (PRA). This chain is Anthranilate phosphoribosyltransferase, found in Desulfosudis oleivorans (strain DSM 6200 / JCM 39069 / Hxd3) (Desulfococcus oleovorans).